The following is a 299-amino-acid chain: CCR4-NOT transcription complex subunit 9 (299 aa).

The residue at position 1 (M1) is an N-acetylmethionine.

The protein belongs to the CNOT9 family. As to quaternary structure, homodimer. Component of the CCR4-NOT complex; distinct complexes seem to exist that differ in the participation of probably mutually exclusive catalytic subunits. Interacts with MYB, ATF2, RARA, RARB, RARG, RXRA, RXRB and RXRG. Identified in a complex with ATF2 bound to target DNA. Interacts with NANOS2. Directly interacts with ZNF335.

Its subcellular location is the nucleus. It is found in the cytoplasm. It localises to the P-body. In terms of biological role, component of the CCR4-NOT complex which is one of the major cellular mRNA deadenylases and is linked to various cellular processes including bulk mRNA degradation, miRNA-mediated repression, translational repression during translational initiation and general transcription regulation. Additional complex functions may be a consequence of its influence on mRNA expression. Involved in down-regulation of MYB- and JUN-dependent transcription. Enhances ligand-dependent transcriptional activity of nuclear hormone receptors. May play a role in cell differentiation. This is CCR4-NOT transcription complex subunit 9 from Bos taurus (Bovine).